Consider the following 421-residue polypeptide: Cyclin-A1 (421 aa).

A disordered region spans residues 1–20 (MRRHSSKSGVALPPVGQGPD).

Belongs to the cyclin family. Cyclin AB subfamily. As to quaternary structure, interacts with the CDK2 and the CDC2 protein kinases to form a serine/threonine kinase holoenzyme complex. The cyclin subunit imparts substrate specificity to the complex. Does not bind CDK4 and CDK5 (in vitro). The cyclin A1-CDK2 complex interacts with transcription factor E2F-1 and RB proteins. Found in a complex with CDK2, CABLES1 and CCNE1. Interacts with INCA1 and KLHDC9. Post-translationally, polyubiquitinated via 'Lys-11'-linked ubiquitin by the anaphase-promoting complex (APC/C), leading to its degradation by the proteasome. Deubiquitinated and stabilized by USP37 enables entry into S phase. Ubiquitinated during the G1 phase by the SCF(FBXO31) complex, leading to its proteasomal degradation.

The protein resides in the nucleus. In terms of biological role, may be involved in the control of the cell cycle at the G1/S (start) and G2/M (mitosis) transitions. May primarily function in the control of the germline meiotic cell cycle and additionally in the control of mitotic cell cycle in some somatic cells. The sequence is that of Cyclin-A1 (Ccna1) from Rattus norvegicus (Rat).